The following is a 314-amino-acid chain: MARLPILLLLISLVYSTPSPQTSKKIGDDATLSCNRNNTTDYVVMSAWYKEPNSIILLAAKSDVLYFDNYTKDKISYDSPYDDLVTTITIKSLTARDAGTYVCAFFMTSTTNDTDKVDYEEYSTELIVNTDSESTIDIILSGSTHSPETSSEKPDYIDNSNCSSVFEIATPEPITDNEEDHTDVTYTSENINTVSTTSRESTTDETPEPITDKEEDHTVTDTVSYTTVSTSSGIVTTKSTTDDADLYDTYNDNDTVPPTTVGGSTTSISNYKTKDFVEIFGITALIILSAVAIFCITYYICNKRSRKYKTENKV.

A signal peptide spans 1-16; sequence MARLPILLLLISLVYS. Residues 17-121 enclose the Ig-like V-type domain; it reads TPSPQTSKKI…NDTDKVDYEE (105 aa). Topologically, residues 17-278 are virion surface; that stretch reads TPSPQTSKKI…SNYKTKDFVE (262 aa). Cysteines 34 and 103 form a disulfide. 5 N-linked (GlcNAc...) asparagine; by host glycosylation sites follow: N37, N38, N69, N112, and N161. Residues 192–217 are disordered; the sequence is NTVSTTSRESTTDETPEPITDKEEDH. N253 is a glycosylation site (N-linked (GlcNAc...) asparagine; by host). Residues 279 to 302 traverse the membrane as a helical segment; the sequence is IFGITALIILSAVAIFCITYYICN. The Intravirion portion of the chain corresponds to 303–314; sequence KRSRKYKTENKV.

It belongs to the orthopoxvirus OPG185 family. As to quaternary structure, heterodimerizes with OPG040. The heterodimer OPG185-OPG040 interacts with components of the entry fusion complex OPG143 and OPG094. Heterodimer with C3/VPC protein; disulfide-linked. Glycosylated; contains phosphate and sulfate-substituted glycans. O-glycosylation is required for hemagglutination and hemadsorption activities of infected cell membranes.

The protein localises to the virion membrane. Its subcellular location is the host membrane. Its function is as follows. Prevents cell to cell fusion by interacting with and directing the viral OPG040 protein on the host plasma membrane. The OPG185-OPG040 complex associates with components of the entry fusion complex (EFC) presumably to avoid superinfection and syncytium formation. Via its interaction with C3/VCP protein, protects the infected cell and probably also the extracellular enveloped virus from complement attack. The polypeptide is Protein OPG185 (OPG185) (Bos taurus (Bovine)).